A 104-amino-acid polypeptide reads, in one-letter code: Large ribosomal subunit protein uL24 (104 aa).

This sequence belongs to the universal ribosomal protein uL24 family. As to quaternary structure, part of the 50S ribosomal subunit.

One of two assembly initiator proteins, it binds directly to the 5'-end of the 23S rRNA, where it nucleates assembly of the 50S subunit. In terms of biological role, one of the proteins that surrounds the polypeptide exit tunnel on the outside of the subunit. This chain is Large ribosomal subunit protein uL24, found in Pseudoalteromonas atlantica (strain T6c / ATCC BAA-1087).